The following is a 170-amino-acid chain: Alpha-crystallin A chain (170 aa).

Residue M1 is modified to N-acetylmethionine. Residues 1-63 (MDVTIQHPWF…RTALDSGISE (63 aa)) are required for complex formation with BFSP1 and BFSP2. At Q6 the chain carries Deamidated glutamine; partial. S45 carries the phosphoserine modification. Q50 carries the post-translational modification Deamidated glutamine; partial. In terms of domain architecture, sHSP spans 52–161 (LFRTALDSGI…GERTIPVSRE (110 aa)). At K99 the chain carries N6-acetyllysine. A Zn(2+)-binding site is contributed by H100. N101 is modified (deamidated asparagine; partial). 3 residues coordinate Zn(2+): E102, H107, and H151. Residues 144-170 (PKLVDPSHGERTIPVSREEKPSSAPSS) form a disordered region. The segment covering 148–164 (DPSHGERTIPVSREEKP) has biased composition (basic and acidic residues). Residue S159 is glycosylated (O-linked (GlcNAc) serine).

It belongs to the small heat shock protein (HSP20) family. In terms of assembly, heteromer composed of three CRYAA and one CRYAB subunits. Inter-subunit bridging via zinc ions enhances stability, which is crucial as there is no protein turn over in the lens. Can also form homodimers and homotetramers (dimers of dimers) which serve as the building blocks of homooligomers. Within homooligomers, the zinc-binding motif is created from residues of 3 different molecules. His-100 and Glu-102 from one molecule are ligands of the zinc ion, and His-107 and His-151 residues from additional molecules complete the site with tetrahedral coordination geometry. Part of a complex required for lens intermediate filament formation composed of BFSP1, BFSP2 and CRYAA. In terms of processing, acetylation at Lys-99 may increase chaperone activity. Post-translationally, undergoes age-dependent proteolytical cleavage at the C-terminus.

The protein localises to the cytoplasm. Its subcellular location is the nucleus. Functionally, contributes to the transparency and refractive index of the lens. Acts as a chaperone, preventing aggregation of various proteins under a wide range of stress conditions. Required for the correct formation of lens intermediate filaments as part of a complex composed of BFSP1, BFSP2 and CRYAA. This chain is Alpha-crystallin A chain (CRYAA), found in Tamandua mexicana (Northern Tamandua).